Here is a 672-residue protein sequence, read N- to C-terminus: tRNA 5-methylaminomethyl-2-thiouridine biosynthesis bifunctional protein MnmC (672 aa).

The segment at 1-243 (MTSITHAELG…KREMIAGCME (243 aa)) is tRNA (mnm(5)s(2)U34)-methyltransferase. Positions 269-672 (IGGGIASAAL…LRKGKAITEL (404 aa)) are FAD-dependent cmnm(5)s(2)U34 oxidoreductase.

This sequence in the N-terminal section; belongs to the methyltransferase superfamily. tRNA (mnm(5)s(2)U34)-methyltransferase family. It in the C-terminal section; belongs to the DAO family. Requires FAD as cofactor.

The protein resides in the cytoplasm. It carries out the reaction 5-aminomethyl-2-thiouridine(34) in tRNA + S-adenosyl-L-methionine = 5-methylaminomethyl-2-thiouridine(34) in tRNA + S-adenosyl-L-homocysteine + H(+). Functionally, catalyzes the last two steps in the biosynthesis of 5-methylaminomethyl-2-thiouridine (mnm(5)s(2)U) at the wobble position (U34) in tRNA. Catalyzes the FAD-dependent demodification of cmnm(5)s(2)U34 to nm(5)s(2)U34, followed by the transfer of a methyl group from S-adenosyl-L-methionine to nm(5)s(2)U34, to form mnm(5)s(2)U34. The protein is tRNA 5-methylaminomethyl-2-thiouridine biosynthesis bifunctional protein MnmC of Vibrio vulnificus (strain YJ016).